We begin with the raw amino-acid sequence, 148 residues long: Nucleoside diphosphate kinase (148 aa).

Residues K9, F57, R85, T91, R102, and N112 each coordinate ATP. The residue at position 91 (T91) is a Phosphothreonine. The Pros-phosphohistidine intermediate role is filled by H115. The residue at position 122 (S122) is a Phosphoserine.

Belongs to the NDK family. In terms of assembly, homotetramer. It depends on Mg(2+) as a cofactor.

Its subcellular location is the cytoplasm. It catalyses the reaction a 2'-deoxyribonucleoside 5'-diphosphate + ATP = a 2'-deoxyribonucleoside 5'-triphosphate + ADP. It carries out the reaction a ribonucleoside 5'-diphosphate + ATP = a ribonucleoside 5'-triphosphate + ADP. Functionally, major role in the synthesis of nucleoside triphosphates other than ATP. The ATP gamma phosphate is transferred to the NDP beta phosphate via a ping-pong mechanism, using a phosphorylated active-site intermediate. The sequence is that of Nucleoside diphosphate kinase from Oceanobacillus iheyensis (strain DSM 14371 / CIP 107618 / JCM 11309 / KCTC 3954 / HTE831).